We begin with the raw amino-acid sequence, 411 residues long: Phosphoglycerate kinase (411 aa).

Substrate-binding positions include 28 to 30 (DIN), Arg-45, 68 to 71 (HQSR), Arg-125, and Arg-165. Residues Glu-338 and 364–367 (GGHL) contribute to the ATP site.

The protein belongs to the phosphoglycerate kinase family. As to quaternary structure, homodimer.

The protein resides in the cytoplasm. The catalysed reaction is (2R)-3-phosphoglycerate + ATP = (2R)-3-phospho-glyceroyl phosphate + ADP. It functions in the pathway carbohydrate degradation; glycolysis; pyruvate from D-glyceraldehyde 3-phosphate: step 2/5. The sequence is that of Phosphoglycerate kinase (pgk) from Methanothermobacter thermautotrophicus (strain ATCC 29096 / DSM 1053 / JCM 10044 / NBRC 100330 / Delta H) (Methanobacterium thermoautotrophicum).